The following is a 205-amino-acid chain: DNA-directed RNA polymerase subunit 5 (205 aa).

Belongs to the archaeal Rpo5/eukaryotic RPB5 RNA polymerase subunit family.

Its subcellular location is the virion. It catalyses the reaction RNA(n) + a ribonucleoside 5'-triphosphate = RNA(n+1) + diphosphate. Its function is as follows. DNA-dependent RNA polymerase catalyzes the transcription of DNA into RNA using the four ribonucleoside triphosphates as substrates. The protein is DNA-directed RNA polymerase subunit 5 of Acanthamoeba polyphaga (Amoeba).